A 224-amino-acid chain; its full sequence is Uracil phosphoribosyltransferase (224 aa).

GTP is bound at residue 38–42 (KGLVK). Residues Arg-87, Arg-112, and 140 to 148 (DPMIATGST) contribute to the 5-phospho-alpha-D-ribose 1-diphosphate site. Residues Ile-204 and 209–211 (GDA) contribute to the uracil site. Asp-210 is a 5-phospho-alpha-D-ribose 1-diphosphate binding site.

Belongs to the UPRTase family. It depends on Mg(2+) as a cofactor.

The catalysed reaction is UMP + diphosphate = 5-phospho-alpha-D-ribose 1-diphosphate + uracil. Its pathway is pyrimidine metabolism; UMP biosynthesis via salvage pathway; UMP from uracil: step 1/1. Its activity is regulated as follows. Allosterically activated by GTP. Functionally, catalyzes the conversion of uracil and 5-phospho-alpha-D-ribose 1-diphosphate (PRPP) to UMP and diphosphate. The protein is Uracil phosphoribosyltransferase of Thermococcus gammatolerans (strain DSM 15229 / JCM 11827 / EJ3).